A 336-amino-acid chain; its full sequence is UPF0104 membrane protein MJ1595 (336 aa).

The next 9 helical transmembrane spans lie at 9 to 29, 40 to 60, 68 to 88, 127 to 147, 154 to 174, 223 to 243, 245 to 265, 285 to 305, and 306 to 326; these read STIL…YIGL, NPEY…ILSA, ILGY…GLFI, VLDT…FVVT, YLIL…YLIA, WEVV…ILKL, LLFL…VYLI, VMIL…AVTL, and LDRL…MLII.

The protein belongs to the UPF0104 family.

The protein localises to the cell membrane. This Methanocaldococcus jannaschii (strain ATCC 43067 / DSM 2661 / JAL-1 / JCM 10045 / NBRC 100440) (Methanococcus jannaschii) protein is UPF0104 membrane protein MJ1595.